The sequence spans 95 residues: Small ribosomal subunit protein bS6 (95 aa).

Belongs to the bacterial ribosomal protein bS6 family.

Binds together with bS18 to 16S ribosomal RNA. The chain is Small ribosomal subunit protein bS6 from Clostridium acetobutylicum (strain ATCC 824 / DSM 792 / JCM 1419 / IAM 19013 / LMG 5710 / NBRC 13948 / NRRL B-527 / VKM B-1787 / 2291 / W).